Consider the following 312-residue polypeptide: NAD-dependent protein deacylase Sirt4 (312 aa).

A mitochondrion-targeting transit peptide spans 1-16; it reads MRVGQLLRFRSTSLRS. Residues 28 to 312 form the Deacetylase sirtuin-type domain; the sequence is KPVVEDDIKR…FDFRNSKSVS (285 aa). NAD(+) contacts are provided by residues 53-73 and 134-137; these read GAGI…VGLY and QNVD. His-152 acts as the Proton acceptor in catalysis. Zn(2+)-binding residues include Cys-160, Cys-163, Cys-211, and Cys-214. Residues 251–253, 277–279, and Cys-295 each bind NAD(+); these read GSS and NIG.

This sequence belongs to the sirtuin family. Class II subfamily. It depends on Zn(2+) as a cofactor.

The protein localises to the mitochondrion matrix. It catalyses the reaction N(6)-acetyl-L-lysyl-[protein] + NAD(+) + H2O = 2''-O-acetyl-ADP-D-ribose + nicotinamide + L-lysyl-[protein]. In terms of biological role, NAD-dependent protein deacylase. Catalyzes the NAD-dependent hydrolysis of acyl groups from lysine residues. In Drosophila melanogaster (Fruit fly), this protein is NAD-dependent protein deacylase Sirt4 (Sirt4).